Here is a 483-residue protein sequence, read N- to C-terminus: Probable 4-aminobutyrate aminotransferase, mitochondrial (483 aa).

Residue 148–149 coordinates pyridoxal 5'-phosphate; sequence GT. Arginine 204 serves as a coordination point for substrate. At lysine 341 the chain carries N6-(pyridoxal phosphate)lysine. Threonine 365 serves as a coordination point for pyridoxal 5'-phosphate.

This sequence belongs to the class-III pyridoxal-phosphate-dependent aminotransferase family. In terms of assembly, homodimer. The cofactor is pyridoxal 5'-phosphate.

Its subcellular location is the mitochondrion matrix. The enzyme catalyses 4-aminobutanoate + 2-oxoglutarate = succinate semialdehyde + L-glutamate. The catalysed reaction is (S)-3-amino-2-methylpropanoate + 2-oxoglutarate = 2-methyl-3-oxopropanoate + L-glutamate. The sequence is that of Probable 4-aminobutyrate aminotransferase, mitochondrial (gta-1) from Caenorhabditis elegans.